The chain runs to 177 residues: NADH-quinone oxidoreductase subunit B (177 aa).

4 residues coordinate [4Fe-4S] cluster: Cys-56, Cys-57, Cys-121, and Cys-151.

Belongs to the complex I 20 kDa subunit family. NDH-1 is composed of 14 different subunits. Subunits NuoB, C, D, E, F, and G constitute the peripheral sector of the complex. It depends on [4Fe-4S] cluster as a cofactor.

The protein localises to the cell inner membrane. It carries out the reaction a quinone + NADH + 5 H(+)(in) = a quinol + NAD(+) + 4 H(+)(out). NDH-1 shuttles electrons from NADH, via FMN and iron-sulfur (Fe-S) centers, to quinones in the respiratory chain. Couples the redox reaction to proton translocation (for every two electrons transferred, four hydrogen ions are translocated across the cytoplasmic membrane), and thus conserves the redox energy in a proton gradient. This Dinoroseobacter shibae (strain DSM 16493 / NCIMB 14021 / DFL 12) protein is NADH-quinone oxidoreductase subunit B.